The primary structure comprises 172 residues: MANPRVFFDMTVGGAPAGRIVMELYANEVPKTAENFRALCTGEKGVGKSGKPLHYKGSTFHRVIPEFMCQGGDFTRGNGTGGESIYGEKFPDEKFVRKQPAPGVLSMANAGPNTNGSQFFICTVATPWLDGKHVVFGQVVEGMDVVKAIEKVGTRNGSTSKVVKVADCGQLS.

The 164-residue stretch at 7 to 170 (FFDMTVGGAP…KVVKVADCGQ (164 aa)) folds into the PPIase cyclophilin-type domain.

Belongs to the cyclophilin-type PPIase family.

It localises to the cytoplasm. The enzyme catalyses [protein]-peptidylproline (omega=180) = [protein]-peptidylproline (omega=0). Binds cyclosporin A (CsA). CsA mediates some of its effects via an inhibitory action on PPIase. Functionally, PPIases accelerate the folding of proteins. It catalyzes the cis-trans isomerization of proline imidic peptide bonds in oligopeptides. This is Peptidyl-prolyl cis-trans isomerase (CYP) from Zea mays (Maize).